A 399-amino-acid chain; its full sequence is Elongation factor Tu 2 (399 aa).

Residues 10–209 (KPHVNIGTIG…QVDGYIPEPE (200 aa)) form the tr-type G domain. Positions 19-26 (GHVDHGKT) are G1. Residue 19–26 (GHVDHGKT) participates in GTP binding. A Mg(2+)-binding site is contributed by Thr26. The G2 stretch occupies residues 60-64 (GITIA). Residues 81 to 84 (DCPG) are G3. GTP is bound by residues 81–85 (DCPGH) and 136–139 (NKAD). The segment at 136 to 139 (NKAD) is G4. Residues 174 to 176 (SAL) form a G5 region.

It belongs to the TRAFAC class translation factor GTPase superfamily. Classic translation factor GTPase family. EF-Tu/EF-1A subfamily. As to quaternary structure, monomer.

The protein localises to the cytoplasm. It carries out the reaction GTP + H2O = GDP + phosphate + H(+). Functionally, GTP hydrolase that promotes the GTP-dependent binding of aminoacyl-tRNA to the A-site of ribosomes during protein biosynthesis. The protein is Elongation factor Tu 2 of Syntrophotalea carbinolica (strain DSM 2380 / NBRC 103641 / GraBd1) (Pelobacter carbinolicus).